We begin with the raw amino-acid sequence, 214 residues long: MQEIIIQVMNQFGYFGVAFLIMIENIFPPIPSEVILTFGGFMTTYSELGIIGMIIAATIGSVLGALILYFVGRLLSVERLEKLVSGRLGKVLRLKPEDITKAEKWFLKRGYATIFFCRFIPLIRSLISIPAGSAKMKLPSFLILTTLGTLIWNIVLVCLGAALGDNWEMIAGILDSYSSVVVVILGIIFILAILIFVKKRFFPKNKNYSSDTEK.

The next 3 membrane-spanning stretches (helical) occupy residues 48–68, 141–161, and 177–197; these read LGII…ALIL, FLIL…CLGA, and YSSV…LIFV.

Belongs to the DedA family.

It localises to the cell membrane. This chain is Alkaline phosphatase-like protein (apl), found in Lactococcus lactis subsp. lactis (strain IL1403) (Streptococcus lactis).